The primary structure comprises 146 residues: Large ribosomal subunit protein uL15 (146 aa).

Residues 1–13 (MKLHELYPAEGSR) show a composition bias toward basic and acidic residues. Residues 1–55 (MKLHELYPAEGSRKVRNRVGRGAATGNGKTSGRGQKGQKARSGGKVRPGFEGGQL) form a disordered region. Over residues 23–35 (AATGNGKTSGRGQ) the composition is skewed to gly residues.

Belongs to the universal ribosomal protein uL15 family. In terms of assembly, part of the 50S ribosomal subunit.

Its function is as follows. Binds to the 23S rRNA. This Staphylococcus carnosus (strain TM300) protein is Large ribosomal subunit protein uL15.